We begin with the raw amino-acid sequence, 463 residues long: MSSVTGSGITSGFIDLATYDNLERAMYGGSDATTYFVKEHYPVGWFTKLPSLAAKMSGNPAFGQQFSVGVPRSGDYILNAWLVLKTPEVELLAANQLGENGTIRWTKNPMHNIVESVTLSFNDISAQSFNTAYLDAWSEYTMPEAKRIGYYNMIGNTSDLINPAPATGQDGARVLPAKNLVLPLPFFFSRDSGLALPVVSLPYNEIRITVKLRAIQDLLILQHNTTGAISPIVASDLAGGLPDTVEANVYMTVALITGDERQAMSSTVRDMVVEQVQVAPVHMVNPRNAATFHTDMRFSHAVKALMFMVQNVTHPSVGSNYTCVTPVVGAGNTVLEPALAVDPVKSASLVYENTTRLPDMGVEYYSLVEPWYYATSIPVSTGHHLYSYALSMQDPHPSGSTNYGRLTNASLNVTLSAEATTAAAGGGGDNSGYTTAQKYALIVLAINHNIIRIMNGSMGFPIL.

Belongs to the NCLDV major capsid protein family. As to quaternary structure, homotrimer.

The protein localises to the virion. Its function is as follows. Major capsid protein that self assembles to form an icosahedral capsid. Represents around 50% of the total virion protein mass. This is Major capsid protein (MCP) from Rana tigrina ranavirus.